The chain runs to 316 residues: tRNA uridine(34) hydroxylase (316 aa).

A Rhodanese domain is found at 123–217; it reads LSDDTVVIDA…YGKDPETKGE (95 aa). The active-site Cysteine persulfide intermediate is cysteine 177.

It belongs to the TrhO family.

It carries out the reaction uridine(34) in tRNA + AH2 + O2 = 5-hydroxyuridine(34) in tRNA + A + H2O. Catalyzes oxygen-dependent 5-hydroxyuridine (ho5U) modification at position 34 in tRNAs. This is tRNA uridine(34) hydroxylase from Staphylococcus saprophyticus subsp. saprophyticus (strain ATCC 15305 / DSM 20229 / NCIMB 8711 / NCTC 7292 / S-41).